Here is a 274-residue protein sequence, read N- to C-terminus: Large ribosomal subunit protein uL2 (274 aa).

Disordered stretches follow at residues 28-55 (APHA…RHVG) and 224-274 (VAMN…RRRK).

This sequence belongs to the universal ribosomal protein uL2 family. Part of the 50S ribosomal subunit. Forms a bridge to the 30S subunit in the 70S ribosome.

Its function is as follows. One of the primary rRNA binding proteins. Required for association of the 30S and 50S subunits to form the 70S ribosome, for tRNA binding and peptide bond formation. It has been suggested to have peptidyltransferase activity; this is somewhat controversial. Makes several contacts with the 16S rRNA in the 70S ribosome. The sequence is that of Large ribosomal subunit protein uL2 from Pseudomonas putida (strain ATCC 47054 / DSM 6125 / CFBP 8728 / NCIMB 11950 / KT2440).